The primary structure comprises 212 residues: uncharacterized protein (212 aa).

The S-adenosyl-L-methionine site is built by glycine 53, glutamate 74, and aspartate 97.

It belongs to the methyltransferase superfamily. YrrT family.

Could be a S-adenosyl-L-methionine-dependent methyltransferase. This is an uncharacterized protein from Bacillus thuringiensis (strain Al Hakam).